A 240-amino-acid chain; its full sequence is Putative peptidoglycan hydrolase Rv2525c (240 aa).

The tat-type signal signal peptide spans 1-33 (MSVSRRDVLKFAAATPGVLGLGVVASSLRAAPA).

In terms of processing, predicted to be exported by the Tat system. The position of the signal peptide cleavage has not been experimentally proven.

It localises to the secreted. The enzyme catalyses Hydrolysis of (1-&gt;4)-beta-linkages between N-acetylmuramic acid and N-acetyl-D-glucosamine residues in a peptidoglycan and between N-acetyl-D-glucosamine residues in chitodextrins.. It functions in the pathway cell wall degradation; peptidoglycan degradation. In terms of biological role, may function as a peptidoglycan hydrolase with glycosidase activity. In vitro, displays esterase activity toward p-nitrophenyl esters of various acyl chain length (C4 to C16), with a preference for p-nitrophenyl butyrate (C4). The sequence is that of Putative peptidoglycan hydrolase Rv2525c from Mycobacterium tuberculosis (strain ATCC 25618 / H37Rv).